The following is a 184-amino-acid chain: Photosystem I assembly protein Ycf4 (184 aa).

Transmembrane regions (helical) follow at residues 22–42 (FGWA…GASS) and 57–77 (IVFF…LFIS).

This sequence belongs to the Ycf4 family.

The protein localises to the plastid. The protein resides in the chloroplast thylakoid membrane. In terms of biological role, seems to be required for the assembly of the photosystem I complex. The polypeptide is Photosystem I assembly protein Ycf4 (Acorus calamus (Sweet flag)).